A 435-amino-acid polypeptide reads, in one-letter code: 3-phosphoshikimate 1-carboxyvinyltransferase (435 aa).

3 residues coordinate 3-phosphoshikimate: lysine 21, serine 22, and arginine 26. Position 21 (lysine 21) interacts with phosphoenolpyruvate. Positions 98 and 126 each coordinate phosphoenolpyruvate. 3-phosphoshikimate contacts are provided by serine 169, serine 170, glutamine 171, serine 197, aspartate 312, and lysine 339. Glutamine 171 is a binding site for phosphoenolpyruvate. The Proton acceptor role is filled by aspartate 312. 3 residues coordinate phosphoenolpyruvate: arginine 343, arginine 386, and lysine 412.

This sequence belongs to the EPSP synthase family. As to quaternary structure, monomer.

Its subcellular location is the cytoplasm. The catalysed reaction is 3-phosphoshikimate + phosphoenolpyruvate = 5-O-(1-carboxyvinyl)-3-phosphoshikimate + phosphate. It participates in metabolic intermediate biosynthesis; chorismate biosynthesis; chorismate from D-erythrose 4-phosphate and phosphoenolpyruvate: step 6/7. In terms of biological role, catalyzes the transfer of the enolpyruvyl moiety of phosphoenolpyruvate (PEP) to the 5-hydroxyl of shikimate-3-phosphate (S3P) to produce enolpyruvyl shikimate-3-phosphate and inorganic phosphate. In Clostridium beijerinckii (strain ATCC 51743 / NCIMB 8052) (Clostridium acetobutylicum), this protein is 3-phosphoshikimate 1-carboxyvinyltransferase.